We begin with the raw amino-acid sequence, 440 residues long: L-seryl-tRNA(Sec) selenium transferase (440 aa).

At Lys-282 the chain carries N6-(pyridoxal phosphate)lysine.

This sequence belongs to the SelA family. It depends on pyridoxal 5'-phosphate as a cofactor.

The protein resides in the cytoplasm. The catalysed reaction is L-seryl-tRNA(Sec) + selenophosphate + H(+) = L-selenocysteinyl-tRNA(Sec) + phosphate. Its pathway is aminoacyl-tRNA biosynthesis; selenocysteinyl-tRNA(Sec) biosynthesis; selenocysteinyl-tRNA(Sec) from L-seryl-tRNA(Sec) (bacterial route): step 1/1. Its function is as follows. Converts seryl-tRNA(Sec) to selenocysteinyl-tRNA(Sec) required for selenoprotein biosynthesis. The sequence is that of L-seryl-tRNA(Sec) selenium transferase from Campylobacter jejuni subsp. jejuni serotype O:2 (strain ATCC 700819 / NCTC 11168).